The sequence spans 278 residues: 4-deoxy-L-threo-5-hexosulose-uronate ketol-isomerase (278 aa).

Residues His-196, His-198, Glu-203, and His-245 each contribute to the Zn(2+) site.

This sequence belongs to the KduI family. In terms of assembly, homohexamer. Requires Zn(2+) as cofactor.

It catalyses the reaction 5-dehydro-4-deoxy-D-glucuronate = 3-deoxy-D-glycero-2,5-hexodiulosonate. Its pathway is glycan metabolism; pectin degradation; 2-dehydro-3-deoxy-D-gluconate from pectin: step 4/5. Its function is as follows. Catalyzes the isomerization of 5-dehydro-4-deoxy-D-glucuronate to 3-deoxy-D-glycero-2,5-hexodiulosonate. The protein is 4-deoxy-L-threo-5-hexosulose-uronate ketol-isomerase of Escherichia coli O8 (strain IAI1).